The sequence spans 245 residues: Probable 2-phosphosulfolactate phosphatase (245 aa).

It belongs to the ComB family. Mg(2+) serves as cofactor.

The catalysed reaction is (2R)-O-phospho-3-sulfolactate + H2O = (2R)-3-sulfolactate + phosphate. The chain is Probable 2-phosphosulfolactate phosphatase from Trichormus variabilis (strain ATCC 29413 / PCC 7937) (Anabaena variabilis).